Reading from the N-terminus, the 178-residue chain is Vegetative protein (178 aa).

2 disordered regions span residues 67-102 (AGRRGPGRPPAARSAVTAAPAAVGGKRRGRKPAAAG) and 138-158 (NRRPSDWKDYADPDSVDDIKL). Positions 76 to 90 (PAARSAVTAAPAAVG) are enriched in low complexity.

In Myxococcus xanthus, this protein is Vegetative protein (vegA).